An 819-amino-acid polypeptide reads, in one-letter code: THO complex subunit 5B (819 aa).

Residues A285 to D332 are disordered.

Belongs to the THOC5 family. In terms of assembly, component of the THO complex, which is composed of THO1, THO2, THO3, THO5, THO6 and THO7.

Its subcellular location is the nucleus. In terms of biological role, acts as a component of the THO subcomplex of the TREX complex which is thought to couple mRNA transcription, processing and nuclear export. This Arabidopsis thaliana (Mouse-ear cress) protein is THO complex subunit 5B (THO5B).